Reading from the N-terminus, the 790-residue chain is Phenylalanine--tRNA ligase beta subunit (790 aa).

Residues 39–147 (AKPFSGIVVG…ADAPVGVDVR (109 aa)) enclose the tRNA-binding domain. The 77-residue stretch at 400 to 476 (PAKALVNLRH…RLYGYNKLPV (77 aa)) folds into the B5 domain. The Mg(2+) site is built by Asp454, Asp460, Glu463, and Glu464. In terms of domain architecture, FDX-ACB spans 696–789 (SRFPEIRRDL…LGNRFGASLR (94 aa)).

Belongs to the phenylalanyl-tRNA synthetase beta subunit family. Type 1 subfamily. In terms of assembly, tetramer of two alpha and two beta subunits. Requires Mg(2+) as cofactor.

It is found in the cytoplasm. The catalysed reaction is tRNA(Phe) + L-phenylalanine + ATP = L-phenylalanyl-tRNA(Phe) + AMP + diphosphate + H(+). The polypeptide is Phenylalanine--tRNA ligase beta subunit (Hahella chejuensis (strain KCTC 2396)).